The following is a 1361-amino-acid chain: DNA-directed RNA polymerase subunit beta'' (1361 aa).

Cysteine 224, cysteine 295, cysteine 302, and cysteine 305 together coordinate Zn(2+).

It belongs to the RNA polymerase beta' chain family. RpoC2 subfamily. In terms of assembly, in plastids the minimal PEP RNA polymerase catalytic core is composed of four subunits: alpha, beta, beta', and beta''. When a (nuclear-encoded) sigma factor is associated with the core the holoenzyme is formed, which can initiate transcription. Requires Zn(2+) as cofactor.

The protein localises to the plastid. It is found in the chloroplast. It catalyses the reaction RNA(n) + a ribonucleoside 5'-triphosphate = RNA(n+1) + diphosphate. DNA-dependent RNA polymerase catalyzes the transcription of DNA into RNA using the four ribonucleoside triphosphates as substrates. This chain is DNA-directed RNA polymerase subunit beta'', found in Spinacia oleracea (Spinach).